A 506-amino-acid polypeptide reads, in one-letter code: Dipeptide and tripeptide permease A (506 aa).

Over Met-1–Arg-36 the chain is Cytoplasmic. A helical transmembrane segment spans residues Phe-37 to Ser-57. The Periplasmic portion of the chain corresponds to Glu-58 to Ser-61. A helical membrane pass occupies residues Ile-62 to Leu-82. Topologically, residues Gly-83–Arg-91 are cytoplasmic. The next 2 helical transmembrane spans lie at Val-92–His-112 and Ser-113–Ala-133. Residues Asn-134 to Thr-155 are Cytoplasmic-facing. A helical transmembrane segment spans residues Met-156–Ala-176. The Periplasmic portion of the chain corresponds to Ala-177 to Gly-180. Residues Trp-181–Phe-201 traverse the membrane as a helical segment. Over Cys-202–Lys-222 the chain is Cytoplasmic. A helical membrane pass occupies residues Leu-223–Asn-243. At Gln-244–Arg-248 the chain is on the periplasmic side. A helical membrane pass occupies residues Trp-249–Val-269. At Ser-270–Lys-276 the chain is on the cytoplasmic side. A helical transmembrane segment spans residues Met-277–Met-297. Over Pro-298–Gln-322 the chain is Periplasmic. A helical membrane pass occupies residues Tyr-323 to Asn-343. The Cytoplasmic segment spans residues Lys-344 to Lys-354. Residues Phe-355–Met-375 traverse the membrane as a helical segment. The Periplasmic portion of the chain corresponds to Ala-376–Asn-385. Residues Trp-386–Leu-406 traverse the membrane as a helical segment. Over Ala-407–Arg-416 the chain is Cytoplasmic. The chain crosses the membrane as a helical span at residues Leu-417 to Gly-437. The Periplasmic portion of the chain corresponds to Tyr-438–Asn-461. The helical transmembrane segment at Val-462–Pro-482 threads the bilayer. Topologically, residues Lys-483–Ala-506 are cytoplasmic.

The protein belongs to the major facilitator superfamily. Proton-dependent oligopeptide transporter (POT/PTR) (TC 2.A.17) family. DtpA subfamily.

It is found in the cell inner membrane. In terms of biological role, proton-dependent permease that transports di- and tripeptides. The polypeptide is Dipeptide and tripeptide permease A (Pectobacterium carotovorum subsp. carotovorum (strain PC1)).